We begin with the raw amino-acid sequence, 226 residues long: MEKRAVVLYSGGLDSTTCLAMAKADGFAPYAMSFSYGQRHGFELEVAKANARPLGAVEHLVVDFDLRRMGGSALTDDISVPKEGVGSDIPVTYVPARNTIFLSFALGWAEVLGAFDIYIGVNSLDYSGYPDCRPEFVSAFEALANLATKSGVEGQGHFSIRTPLINMTKAEIIKAGVALGVDYSWTHSCYDPESDGTSCGRCDSCRLRLKGFAEAGLVDPLTYSGR.

Residue 9–19 (YSGGLDSTTCL) coordinates ATP. C189, C199, C202, and C205 together coordinate Zn(2+).

Belongs to the QueC family. It depends on Zn(2+) as a cofactor.

The enzyme catalyses 7-carboxy-7-deazaguanine + NH4(+) + ATP = 7-cyano-7-deazaguanine + ADP + phosphate + H2O + H(+). It participates in purine metabolism; 7-cyano-7-deazaguanine biosynthesis. Catalyzes the ATP-dependent conversion of 7-carboxy-7-deazaguanine (CDG) to 7-cyano-7-deazaguanine (preQ(0)). This Pelobacter propionicus (strain DSM 2379 / NBRC 103807 / OttBd1) protein is 7-cyano-7-deazaguanine synthase.